We begin with the raw amino-acid sequence, 148 residues long: MHRVTITLDDDLMEKLDAIIAARGYQNRSEAIRDLARIGIQQTAAETTSGHCVGAMVYTYDHSKRDLPRKLTQSFHHHHDLSRATMHVHLDHDQCLEVTILDGNATELQHFADHIFAERGVRYGRLVTIPAEPPAEGHEHHHEHDASS.

Residues histidine 76, histidine 87, histidine 89, and cysteine 95 each coordinate Ni(2+).

The protein belongs to the transcriptional regulatory CopG/NikR family. It depends on Ni(2+) as a cofactor.

Its function is as follows. Transcriptional regulator. This is Putative nickel-responsive regulator from Rhodopseudomonas palustris (strain ATCC BAA-98 / CGA009).